The following is a 214-amino-acid chain: Large ribosomal subunit protein uL4c (214 aa).

Positions 43-80 (KQSNEKRQGSANTKTRSEVRGGGRKPWRQKGTGRARAG) are disordered. Over residues 64–75 (GGRKPWRQKGTG) the composition is skewed to basic residues.

It belongs to the universal ribosomal protein uL4 family. In terms of assembly, part of the 50S ribosomal subunit.

It is found in the plastid. Its subcellular location is the chloroplast. In terms of biological role, probably binds the 23S rRNA. The chain is Large ribosomal subunit protein uL4c (rpl4) from Porphyra purpurea (Red seaweed).